A 254-amino-acid polypeptide reads, in one-letter code: Persulfide dioxygenase ETHE1, mitochondrial (254 aa).

Residues 1–7 (MASAVVR) constitute a mitochondrion transit peptide. 3 positions are modified to phosphoserine: Ser14, Ser17, and Ser19. Lys32 carries the N6-acetyllysine; alternate modification. Lys32 bears the N6-succinyllysine; alternate mark. Lys66 carries the N6-acetyllysine modification. The Fe cation site is built by His79, His135, and Asp154. At Lys172 the chain carries N6-acetyllysine; alternate. Lys172 is modified (N6-succinyllysine; alternate).

Belongs to the metallo-beta-lactamase superfamily. Glyoxalase II family. Homodimer. Monomer. Interacts with TST. May interact with RELA. It depends on Fe(2+) as a cofactor.

The protein localises to the cytoplasm. It localises to the nucleus. Its subcellular location is the mitochondrion matrix. It carries out the reaction S-sulfanylglutathione + O2 + H2O = sulfite + glutathione + 2 H(+). In terms of biological role, first described as a protein that can shuttle between the nucleus and the cytoplasm and suppress p53-induced apoptosis by sequestering the transcription factor RELA/NFKB3 in the cytoplasm and preventing its accumulation in the nucleus. Sulfur dioxygenase that plays an essential role in hydrogen sulfide catabolism in the mitochondrial matrix. Hydrogen sulfide (H(2)S) is first oxidized by SQRDL, giving rise to cysteine persulfide residues. ETHE1 consumes molecular oxygen to catalyze the oxidation of the persulfide, once it has been transferred to a thiophilic acceptor, such as glutathione (R-SSH). Plays an important role in metabolic homeostasis in mitochondria by metabolizing hydrogen sulfide and preventing the accumulation of supraphysiological H(2)S levels that have toxic effects, due to the inhibition of cytochrome c oxidase. This Mus musculus (Mouse) protein is Persulfide dioxygenase ETHE1, mitochondrial (Ethe1).